A 407-amino-acid polypeptide reads, in one-letter code: BTB/POZ and MATH domain-containing protein 1 (407 aa).

Residues 33–167 (NGFHEFKICG…ENSLLVRCRV (135 aa)) enclose the MATH domain. Positions 203–270 (CDVVFQVDGE…IYWDELPDMQ (68 aa)) constitute a BTB domain.

This sequence belongs to the Tdpoz family. Homodimer or heterodimer with BPM3, BPM5 and BPM6. Interacts with CUL3A and CUL3B. Interacts with RAP2-4 and RAP2-13. Binds to MYB56 at the promoter of FLOWERING LOCUS T (FT). Ubiquitous.

The protein resides in the nucleus. It participates in protein modification; protein ubiquitination. May act as a substrate-specific adapter of an E3 ubiquitin-protein ligase complex (CUL3-RBX1-BTB) which mediates the ubiquitination and subsequent proteasomal degradation of target proteins. The polypeptide is BTB/POZ and MATH domain-containing protein 1 (BPM1) (Arabidopsis thaliana (Mouse-ear cress)).